The primary structure comprises 227 residues: UPF0173 metal-dependent hydrolase BT9727_4343 (227 aa).

It belongs to the UPF0173 family.

The chain is UPF0173 metal-dependent hydrolase BT9727_4343 from Bacillus thuringiensis subsp. konkukian (strain 97-27).